Consider the following 429-residue polypeptide: S-adenosylmethionine synthase (429 aa).

His14 contacts ATP. Position 16 (Asp16) interacts with Mg(2+). Residue Glu42 coordinates K(+). L-methionine is bound by residues Glu55 and Gln98. The segment at 98–108 (QSADINRGVDR) is flexible loop. ATP is bound by residues 165 to 167 (DAK), 252 to 253 (KF), Asp261, 267 to 268 (RK), Ala284, and Lys288. Residue Asp261 coordinates L-methionine. Lys292 lines the L-methionine pocket.

The protein belongs to the AdoMet synthase family. In terms of assembly, homotetramer; dimer of dimers. Mg(2+) is required as a cofactor. It depends on K(+) as a cofactor.

Its subcellular location is the cytoplasm. It carries out the reaction L-methionine + ATP + H2O = S-adenosyl-L-methionine + phosphate + diphosphate. The protein operates within amino-acid biosynthesis; S-adenosyl-L-methionine biosynthesis; S-adenosyl-L-methionine from L-methionine: step 1/1. Catalyzes the formation of S-adenosylmethionine (AdoMet) from methionine and ATP. The overall synthetic reaction is composed of two sequential steps, AdoMet formation and the subsequent tripolyphosphate hydrolysis which occurs prior to release of AdoMet from the enzyme. This Porphyromonas gingivalis (strain ATCC 33277 / DSM 20709 / CIP 103683 / JCM 12257 / NCTC 11834 / 2561) protein is S-adenosylmethionine synthase.